The following is a 663-amino-acid chain: Translation factor GUF1 homolog, mitochondrial (663 aa).

The tr-type G domain occupies 64–250 (EKIRNFSIIA…AVIERIPPPP (187 aa)). Residues 73–80 (AHIDHGKS), 143–147 (DTPGH), and 197–200 (NKID) each bind GTP.

It belongs to the TRAFAC class translation factor GTPase superfamily. Classic translation factor GTPase family. LepA subfamily.

The protein localises to the mitochondrion inner membrane. The enzyme catalyses GTP + H2O = GDP + phosphate + H(+). Functionally, promotes mitochondrial protein synthesis. May act as a fidelity factor of the translation reaction, by catalyzing a one-codon backward translocation of tRNAs on improperly translocated ribosomes. Binds to mitochondrial ribosomes in a GTP-dependent manner. The polypeptide is Translation factor GUF1 homolog, mitochondrial (Arabidopsis thaliana (Mouse-ear cress)).